An 802-amino-acid polypeptide reads, in one-letter code: DNA mismatch repair protein MutS (802 aa).

617 to 624 provides a ligand contact to ATP; the sequence is GPNMGGKS.

The protein belongs to the DNA mismatch repair MutS family.

This protein is involved in the repair of mismatches in DNA. It is possible that it carries out the mismatch recognition step. This protein has a weak ATPase activity. In Buchnera aphidicola subsp. Acyrthosiphon pisum (strain Tuc7), this protein is DNA mismatch repair protein MutS.